A 432-amino-acid chain; its full sequence is Homogentisate 1,2-dioxygenase (432 aa).

The active-site Proton acceptor is the histidine 286. 2 residues coordinate Fe cation: histidine 329 and glutamate 335. Tyrosine 344 and histidine 365 together coordinate homogentisate. Histidine 365 provides a ligand contact to Fe cation.

Belongs to the homogentisate dioxygenase family. Hexamer; dimer of trimers. Fe cation is required as a cofactor.

The catalysed reaction is homogentisate + O2 = 4-maleylacetoacetate + H(+). Its pathway is amino-acid degradation; L-phenylalanine degradation; acetoacetate and fumarate from L-phenylalanine: step 4/6. Functionally, involved in the catabolism of homogentisate (2,5-dihydroxyphenylacetate or 2,5-OH-PhAc), a central intermediate in the degradation of phenylalanine and tyrosine. Catalyzes the oxidative ring cleavage of the aromatic ring of homogentisate to yield maleylacetoacetate. The protein is Homogentisate 1,2-dioxygenase of Bordetella bronchiseptica (strain ATCC BAA-588 / NCTC 13252 / RB50) (Alcaligenes bronchisepticus).